Here is a 395-residue protein sequence, read N- to C-terminus: Abhydrolase domain-containing protein (395 aa).

Residues 117–331 (PTIVINHGLT…INAIDDPIAP (215 aa)) form the AB hydrolase-1 domain. Catalysis depends on charge relay system residues S200, D327, and H356.

Belongs to the AB hydrolase superfamily. AB hydrolase 4 family.

This chain is Abhydrolase domain-containing protein (abhd), found in Dictyostelium discoideum (Social amoeba).